The sequence spans 130 residues: MRHRNGLRKLNRTSSHRLAMFRNLTNSLLEHEIIKTTLPKAKELRRVVEPVITLGKNPTLASKRLAFDRLRNRENVVKIFSELGPRYQNRNGGYLRILKCGFRKGDNAPMAIVELLDRSEANNDIVNIAE.

It belongs to the bacterial ribosomal protein bL17 family. As to quaternary structure, part of the 50S ribosomal subunit. Contacts protein L32.

This chain is Large ribosomal subunit protein bL17, found in Nitrosomonas eutropha (strain DSM 101675 / C91 / Nm57).